A 194-amino-acid chain; its full sequence is Protein DROOPING LEAF (194 aa).

Residues C15 to C42 form a C4-type zinc finger. Residues L83–E103 are disordered.

It belongs to the YABBY family.

The protein resides in the nucleus. Its function is as follows. Regulates carpel specification in flower development. Severe or intermediate mutation in DL causes complete or partial homeotic conversion of carpels into stamens without affecting the identities of other floral organs. Interacts antagonistically with class B genes and controls floral meristem determinacy. Regulates midrib formation in leaves probably by inducing cell proliferation in the central region of the leaf. This is Protein DROOPING LEAF (DL) from Oryza sativa subsp. japonica (Rice).